The sequence spans 160 residues: Cytochrome b6-f complex subunit 4 (160 aa).

The next 3 membrane-spanning stretches (helical) occupy residues Leu-36–Ile-56, Leu-95–Glu-115, and Thr-131–Ile-151.

It belongs to the cytochrome b family. PetD subfamily. In terms of assembly, the 4 large subunits of the cytochrome b6-f complex are cytochrome b6, subunit IV (17 kDa polypeptide, petD), cytochrome f and the Rieske protein, while the 4 small subunits are petG, petL, petM and petN. The complex functions as a dimer.

The protein localises to the plastid. Its subcellular location is the chloroplast thylakoid membrane. Its function is as follows. Component of the cytochrome b6-f complex, which mediates electron transfer between photosystem II (PSII) and photosystem I (PSI), cyclic electron flow around PSI, and state transitions. The protein is Cytochrome b6-f complex subunit 4 of Porphyra purpurea (Red seaweed).